The chain runs to 74 residues: Protein A30 homolog (74 aa).

This sequence belongs to the chordopoxvirinae A30 family. In terms of assembly, interacts with protein G7; the interaction stabilizes both proteins. Phosphorylated by viral F10 kinase.

Required for the association between the dense viroplasm and the viral membranes to form the mature virion (MV). The protein is Protein A30 homolog of Fowlpox virus (strain NVSL) (FPV).